The following is a 65-amino-acid chain: Double gene block protein 1 (65 aa).

The interval 1-41 (MDSQRTVELTNPRGRSKERGDSGGKQKNSMGRKIANDAISE) is disordered. The span at 15–24 (RSKERGDSGG) shows a compositional bias: basic and acidic residues. The segment at 17-43 (KERGDSGGKQKNSMGRKIANDAISESK) is RNA-binding.

It belongs to the carmovirus double gene block protein 1 family. As to quaternary structure, homodimer.

Functionally, cell-to-cell movement. Displays RNA-binding activity. The chain is Double gene block protein 1 from Melon necrotic spot virus (MNSV).